A 140-amino-acid chain; its full sequence is Cytochrome c-type biogenesis protein CcmE (140 aa).

The Cytoplasmic portion of the chain corresponds to 1-7; the sequence is MKRKHKR. The helical; Signal-anchor for type II membrane protein transmembrane segment at 8–28 threads the bilayer; sequence LLFVLASFCAAGCALLFILSE. The Periplasmic segment spans residues 29 to 140; that stretch reads LRESVSFFYT…TAPKSSPEPK (112 aa). Residues His121 and Tyr125 each coordinate heme.

The protein belongs to the CcmE/CycJ family.

The protein localises to the cell inner membrane. Functionally, heme chaperone required for the biogenesis of c-type cytochromes. Transiently binds heme delivered by CcmC and transfers the heme to apo-cytochromes in a process facilitated by CcmF and CcmH. This is Cytochrome c-type biogenesis protein CcmE from Anaplasma marginale (strain St. Maries).